Consider the following 391-residue polypeptide: MLRPGGAEEAAQLPLRRASAPVPVPSPAAPDGSRASARLGLACLLLLLLLTLPARVDTSWWYIGALGARVICDNIPGLVSRQRQLCQRYPDIMRSVGEGAREWIRECQHQFRHHRWNCTTLDRDHTVFGRVMLRSSREAAFVYAISSAGVVHAITRACSQGELSVCSCDPYTRGRHHDQRGDFDWGGCSDNIHYGVRFAKAFVDAKEKRLKDARALMNLHNNRCGRTAVRRFLKLECKCHGVSGSCTLRTCWRALSDFRRTGDYLRRRYDGAVQVMATQDGANFTAARQGYRRATRTDLVYFDNSPDYCVLDKAAGSLGTAGRVCSKTSKGTDGCEIMCCGRGYDTTRVTRVTQCECKFHWCCAVRCKECRNTVDVHTCKAPKKAEWLDQT.

5 cysteine pairs are disulfide-bonded: C107–C118, C158–C166, C168–C188, C237–C251, and C239–C246. N117 carries an N-linked (GlcNAc...) asparagine glycan. S243 carries O-palmitoleoyl serine; by PORCN lipidation. N283 carries an N-linked (GlcNAc...) asparagine glycan. 6 disulfide bridges follow: C309-C340, C325-C335, C339-C379, C355-C370, C357-C367, and C362-C363.

It belongs to the Wnt family. In terms of assembly, forms a soluble 1:1 complex with AFM; this prevents oligomerization and is required for prolonged biological activity. The complex with AFM may represent the physiological form in body fluids. Interacts with FZD4 and FZD5. Post-translationally, palmitoleoylation is required for efficient binding to frizzled receptors. Depalmitoleoylation leads to Wnt signaling pathway inhibition. As to expression, isoform 1 is expressed in adult heart, brain, placenta, lung, prostate, testis, ovary, small intestine and colon. In the adult brain, it is mainly found in the caudate nucleus, subthalamic nucleus and thalamus. Also detected in fetal brain, lung and kidney. Isoform 2 is expressed in fetal brain, fetal lung, fetal kidney, caudate nucleus, testis and cancer cell lines.

The protein resides in the secreted. Its subcellular location is the extracellular space. The protein localises to the extracellular matrix. Functionally, ligand for members of the frizzled family of seven transmembrane receptors. Functions in the canonical Wnt/beta-catenin signaling pathway. Plays a redundant role in embryonic lung development. This is Protein Wnt-2b (WNT2B) from Homo sapiens (Human).